The following is a 486-amino-acid chain: Ribulose bisphosphate carboxylase large chain (486 aa).

Asn126 and Thr176 together coordinate substrate. The active-site Proton acceptor is the Lys178. Lys180 is a binding site for substrate. Mg(2+)-binding residues include Lys204, Asp206, and Glu207. At Lys204 the chain carries N6-carboxylysine. Residue His296 is the Proton acceptor of the active site. Residues Arg297, His329, and Ser381 each coordinate substrate.

Belongs to the RuBisCO large chain family. Type I subfamily. Heterohexadecamer of 8 large chains and 8 small chains. Mg(2+) serves as cofactor.

The catalysed reaction is 2 (2R)-3-phosphoglycerate + 2 H(+) = D-ribulose 1,5-bisphosphate + CO2 + H2O. It carries out the reaction D-ribulose 1,5-bisphosphate + O2 = 2-phosphoglycolate + (2R)-3-phosphoglycerate + 2 H(+). Functionally, ruBisCO catalyzes two reactions: the carboxylation of D-ribulose 1,5-bisphosphate, the primary event in carbon dioxide fixation, as well as the oxidative fragmentation of the pentose substrate. Both reactions occur simultaneously and in competition at the same active site. This chain is Ribulose bisphosphate carboxylase large chain, found in Rhizobium meliloti (strain 1021) (Ensifer meliloti).